Consider the following 105-residue polypeptide: U2-lycotoxin-Ls1c (105 aa).

The first 17 residues, 1–17, serve as a signal peptide directing secretion; that stretch reads MIKYVLISALLVVAVYS. Positions 18-41 are excised as a propeptide; it reads FTIEDSEDALLEEAEDELDTEEER. Disulfide bonds link Cys51-Cys67, Cys58-Cys97, Cys60-Cys83, and Cys69-Cys81.

The protein belongs to the neurotoxin 04 (omega-agtx) family. 01 (type I omega-agtx) subfamily. As to expression, expressed by the venom gland.

Its subcellular location is the secreted. Insecticidal to house crickets. It induces an excitatory slow-onset impact that leads to irreversible spastic paralysis. It also modifies human voltage-gated potassium channel Kv1.5/KCNA5. Most likely, it binds to the voltage-sensing domain of the channel, suggesting it does not block the pore but prevents its opening at physiological membrane potentials. The recombinant peptide binds to the channel in an irreversible manner and slows down the hKv1.5 current activation kinetics. It is not toxic to mice, when intracranially injected (at 0.5 ug/g mouse). This Lycosa singoriensis (Wolf spider) protein is U2-lycotoxin-Ls1c.